The following is a 482-amino-acid chain: Methylenetetrahydrofolate--tRNA-(uracil-5-)-methyltransferase TrmFO (482 aa).

11 to 16 lines the FAD pocket; the sequence is GGGLAG. Residues 450-482 are disordered; the sequence is LRQPSPWSAEDSPRAALPIPEPTPLGPASGSSE.

It belongs to the MnmG family. TrmFO subfamily. It depends on FAD as a cofactor.

It localises to the cytoplasm. The enzyme catalyses uridine(54) in tRNA + (6R)-5,10-methylene-5,6,7,8-tetrahydrofolate + NADH + H(+) = 5-methyluridine(54) in tRNA + (6S)-5,6,7,8-tetrahydrofolate + NAD(+). It catalyses the reaction uridine(54) in tRNA + (6R)-5,10-methylene-5,6,7,8-tetrahydrofolate + NADPH + H(+) = 5-methyluridine(54) in tRNA + (6S)-5,6,7,8-tetrahydrofolate + NADP(+). Functionally, catalyzes the folate-dependent formation of 5-methyl-uridine at position 54 (M-5-U54) in all tRNAs. The chain is Methylenetetrahydrofolate--tRNA-(uracil-5-)-methyltransferase TrmFO from Rhodospirillum rubrum (strain ATCC 11170 / ATH 1.1.1 / DSM 467 / LMG 4362 / NCIMB 8255 / S1).